The following is a 409-amino-acid chain: Tryptophan synthase beta chain (409 aa).

Lys-98 is subject to N6-(pyridoxal phosphate)lysine.

The protein belongs to the TrpB family. In terms of assembly, tetramer of two alpha and two beta chains. It depends on pyridoxal 5'-phosphate as a cofactor.

It carries out the reaction (1S,2R)-1-C-(indol-3-yl)glycerol 3-phosphate + L-serine = D-glyceraldehyde 3-phosphate + L-tryptophan + H2O. It participates in amino-acid biosynthesis; L-tryptophan biosynthesis; L-tryptophan from chorismate: step 5/5. The beta subunit is responsible for the synthesis of L-tryptophan from indole and L-serine. The chain is Tryptophan synthase beta chain (trpB) from Cereibacter sphaeroides (strain ATCC 17023 / DSM 158 / JCM 6121 / CCUG 31486 / LMG 2827 / NBRC 12203 / NCIMB 8253 / ATH 2.4.1.) (Rhodobacter sphaeroides).